Consider the following 434-residue polypeptide: Cytochrome c biogenesis protein CcsB (434 aa).

The next 3 helical transmembrane spans lie at 15-35 (LRVAIVLLLLIAACSGLGTAI), 73-93 (SNWFLLLLAWLGLALLLCSLR), and 163-183 (VGPLLVHTGLIVFMVGAVVGA).

It belongs to the Ccs1/CcsB family. In terms of assembly, may interact with CcsA.

Its subcellular location is the cellular thylakoid membrane. Required during biogenesis of c-type cytochromes (cytochrome c6 and cytochrome f) at the step of heme attachment. The chain is Cytochrome c biogenesis protein CcsB from Synechococcus sp. (strain RCC307).